We begin with the raw amino-acid sequence, 694 residues long: Elongation factor G (694 aa).

Residues 11–285 (KDYRNIGIMA…AVIDYLPSPL (275 aa)) enclose the tr-type G domain. Residues 20–27 (AHIDAGKT), 84–88 (DTPGH), and 138–141 (NKMD) each bind GTP.

This sequence belongs to the TRAFAC class translation factor GTPase superfamily. Classic translation factor GTPase family. EF-G/EF-2 subfamily.

It localises to the cytoplasm. In terms of biological role, catalyzes the GTP-dependent ribosomal translocation step during translation elongation. During this step, the ribosome changes from the pre-translocational (PRE) to the post-translocational (POST) state as the newly formed A-site-bound peptidyl-tRNA and P-site-bound deacylated tRNA move to the P and E sites, respectively. Catalyzes the coordinated movement of the two tRNA molecules, the mRNA and conformational changes in the ribosome. The protein is Elongation factor G of Mycoplasma mobile (strain ATCC 43663 / 163K / NCTC 11711) (Mesomycoplasma mobile).